A 229-amino-acid polypeptide reads, in one-letter code: DNA mismatch repair protein MutH (229 aa).

It belongs to the MutH family.

It localises to the cytoplasm. In terms of biological role, sequence-specific endonuclease that cleaves unmethylated GATC sequences. It is involved in DNA mismatch repair. The sequence is that of DNA mismatch repair protein MutH from Escherichia coli O127:H6 (strain E2348/69 / EPEC).